We begin with the raw amino-acid sequence, 30 residues long: Varv peptide B (30 aa).

The segment at residues 1–30 is a cross-link (cyclopeptide (Gly-Asn)); sequence GLPVCGETCFGGTCNTPGCSCDPWPMCSRN. Intrachain disulfides connect cysteine 5/cysteine 19, cysteine 9/cysteine 21, and cysteine 14/cysteine 27.

Post-translationally, this is a cyclic peptide.

In terms of biological role, probably participates in a plant defense mechanism. In Viola arvensis (European field pansy), this protein is Varv peptide B.